The primary structure comprises 474 residues: MAFGKSHRDPYATSVGHLIEKATFAGVLTEDWGQFLHICDIINTTQDGPKDAVKALKKRISKNYNHKEIQLSLSLIDMCVQNCGPSFQSLIVKKEFIKDTLVKLLNPRYTLPLETQNRILNFIKTWSQGFPGGVDVSEVKEVYLDLLKKGVQFPPSDGEPETRQEAGQISPNRPTSVPTAPALSSIIAPKNPTISLVPEQIGKLHSELDMVKMNVKVMTAILMENTPGSENHEDIELLRKLYKTGREMQERIMDLLVVVENEDVTMELIQVNEDLNNAVLGYERFTRNQQRLLEQKRNRTEATRTSSEPSAPSCDLLDLSPIVPVPTPNEGALNSVNAQLSGLSVSSLSPVITNNLYPSLQPQRDLLASEDIEIPTLFPQRTSQNLASSHTYDNFHSNSVLLQPVSLHTATAAAAANQRLPPLPSSHPVLKDGDLQPPNYYEVMEFDPLAPTTEAVYEEIDGYHQKEAQSHSDC.

The 133-residue stretch at 22 to 154 folds into the VHS domain; sequence ATFAGVLTED…DLLKKGVQFP (133 aa). Residues 153–180 are disordered; it reads FPPSDGEPETRQEAGQISPNRPTSVPTA. Residues 165–178 are compositionally biased toward polar residues; that stretch reads EAGQISPNRPTSVP. Ser-170 is modified (phosphoserine). A GAT domain is found at 199–287; that stretch reads EQIGKLHSEL…AVLGYERFTR (89 aa). Positions 291–317 are disordered; the sequence is RLLEQKRNRTEATRTSSEPSAPSCDLL. Over residues 293-302 the composition is skewed to basic and acidic residues; the sequence is LEQKRNRTEA. Phosphoserine occurs at positions 313 and 320. The interaction with GRB2 stretch occupies residues 392 to 395; it reads YDNF. Positions 420–424 match the SH3-binding motif; the sequence is LPPLP. The segment at 441 to 444 is interaction with PIK3R1; the sequence is YEVM. The residue at position 457 (Tyr-457) is a Phosphotyrosine. The SH2-binding motif lies at 457-460; it reads YEEI.

This sequence belongs to the TOM1 family. In terms of assembly, interacts with LYN. Interacts with the SH2 and SH3 domains of FYN when phosphorylated. Also interacts with GRB2 and PIK3R1 when phosphorylated. In terms of processing, phosphorylated on tyrosines by LYN. Phosphorylated on tyrosines by FYN. Strongly expressed in brain and kidney, expressed at intermediate levels skin and heart, and weakly expressed in thymus. Not expressed in liver and spleen.

The protein resides in the golgi apparatus. It is found in the golgi stack. The protein localises to the endosome membrane. It localises to the cytoplasm. Its subcellular location is the membrane. Probable adapter protein involved in signaling pathways. Interacts with the SH2 and SH3 domains of various signaling proteins when it is phosphorylated. May promote FYN activation, possibly by disrupting intramolecular SH3-dependent interactions. This is TOM1-like protein 1 (Tom1l1) from Mus musculus (Mouse).